We begin with the raw amino-acid sequence, 129 residues long: Prefoldin subunit 6 (129 aa).

An N-acetylalanine modification is found at Ala2. N6-acetyllysine is present on Lys21. Residue Lys66 is modified to N6-acetyllysine; alternate. A Glycyl lysine isopeptide (Lys-Gly) (interchain with G-Cter in SUMO1); alternate cross-link involves residue Lys66. A Glycyl lysine isopeptide (Lys-Gly) (interchain with G-Cter in SUMO2); alternate cross-link involves residue Lys66.

This sequence belongs to the prefoldin subunit beta family. As to quaternary structure, heterohexamer of two PFD-alpha type and four PFD-beta type subunits. Component of the PAQosome complex which is responsible for the biogenesis of several protein complexes and which consists of R2TP complex members RUVBL1, RUVBL2, RPAP3 and PIH1D1, URI complex members PFDN2, PFDN6, PDRG1, UXT and URI1 as well as ASDURF, POLR2E and DNAAF10/WDR92.

In terms of biological role, binds specifically to cytosolic chaperonin (c-CPN) and transfers target proteins to it. Binds to nascent polypeptide chain and promotes folding in an environment in which there are many competing pathways for nonnative proteins. The chain is Prefoldin subunit 6 (PFDN6) from Homo sapiens (Human).